We begin with the raw amino-acid sequence, 458 residues long: BPI fold-containing family B member 2 (458 aa).

A signal peptide spans 1–20 (MAWASRLGLLLALLLPVVGA). Position 52 is a phosphothreonine; by FAM20C (threonine 52). Serine 60 carries the post-translational modification Phosphoserine; by FAM20C. 4 N-linked (GlcNAc...) asparagine glycosylation sites follow: asparagine 96, asparagine 151, asparagine 293, and asparagine 332. Cysteines 137 and 174 form a disulfide.

Belongs to the BPI/LBP/Plunc superfamily. BPI/LBP family. In terms of tissue distribution, highly expressed in tonsils, especially in hypertrophic tonsils. Detected at very low levels in fetal liver.

It localises to the secreted. The sequence is that of BPI fold-containing family B member 2 (BPIFB2) from Homo sapiens (Human).